The primary structure comprises 652 residues: MNKRMNELVALLNRYATEYYTSDNPSVSDSEYDRLYRELVELETAYPEQVLADSPTHRVGGKVLDGFEKYSHQYPLYSLQDAFSREELDAFDARVRKEVAHPTYICELKIDGLSISLTYEKGILVAGVTRGDGSIGENITENLKRVKDIPLTLTEELDITVRGECYMPRASFDQVNQARQENGEPEFANPRNAAAGTLRQLDTAVVAKRNLATFLYQEASPSTRDSQEKGLKYLEQLGFVVNPKRILAENIDEIWNFIQEVGQERENLPYDIDGVVIKVNDLASQEELGFTVKAPKWAVAYKFPAEEKEAQLLSVDWTVGRTGVVTPTANLTPVQLAGTTVSRATLHNVDYIAEKDIRKDDTVIVYKAGDIIPAVLRVVESKRVSEEKLDIPTNCPSCNSDLLHFEDEVALRCINPRCPAQIMEGLIHFASRDAMNITGLGPSIVEKLFAANLVKDVADIYRLQEEDFLLLEGVKEKSAAKLYQAIQASKENSAEKLLFGLGIRHVGSKASQLLLQYFHSIENLYQADSEEVASIESLGGVIAKSLQTYFATEGSEILLRELKETGVNLDYKGQTVVADAALSGLTVVLTGKLERLKRSEAKSKLESLGAKVTGSVSKKTDLVVVGADAGSKLQKAQELGIQVRDEAWLESL.

NAD(+) is bound by residues 29 to 33, 78 to 79, and E107; these read DSEYD and SL. K109 functions as the N6-AMP-lysine intermediate in the catalytic mechanism. Residues R130, E164, K278, and K302 each coordinate NAD(+). 4 residues coordinate Zn(2+): C395, C398, C413, and C418. The 76-residue stretch at 577-652 folds into the BRCT domain; that stretch reads VADAALSGLT…VRDEAWLESL (76 aa).

The protein belongs to the NAD-dependent DNA ligase family. LigA subfamily. Mg(2+) serves as cofactor. The cofactor is Mn(2+).

It carries out the reaction NAD(+) + (deoxyribonucleotide)n-3'-hydroxyl + 5'-phospho-(deoxyribonucleotide)m = (deoxyribonucleotide)n+m + AMP + beta-nicotinamide D-nucleotide.. Functionally, DNA ligase that catalyzes the formation of phosphodiester linkages between 5'-phosphoryl and 3'-hydroxyl groups in double-stranded DNA using NAD as a coenzyme and as the energy source for the reaction. It is essential for DNA replication and repair of damaged DNA. The sequence is that of DNA ligase from Streptococcus pneumoniae (strain 70585).